The primary structure comprises 241 residues: Fatty acid metabolism regulator protein (241 aa).

Positions 11-79 (QSPAALAEEY…HGKPTKVNNI (69 aa)) constitute an HTH gntR-type domain. A DNA-binding region (H-T-H motif) is located at residues 39-58 (ERDLADKIGVTRTTLREVLQ).

Homodimer.

Its subcellular location is the cytoplasm. Functionally, multifunctional regulator of fatty acid metabolism. This chain is Fatty acid metabolism regulator protein, found in Haemophilus influenzae (strain PittEE).